The following is a 547-amino-acid chain: CDK5RAP1-like protein (547 aa).

The 116-residue stretch at 79 to 194 (RTVCYVTYGC…LPRLVAVAAG (116 aa)) folds into the MTTase N-terminal domain. Residues Cys88, Cys124, Cys157, Cys232, Cys236, and Cys239 each coordinate [4Fe-4S] cluster. Residues 218–475 (DSASKTAFIS…TTVFREEALK (258 aa)) enclose the Radical SAM core domain. Residues 478-543 (QALIGSEQTV…SQTLKAQLIG (66 aa)) form the TRAM domain.

This sequence belongs to the methylthiotransferase family. MiaB subfamily. The cofactor is [4Fe-4S] cluster.

In terms of biological role, potential regulator of CDK5 activity. This is CDK5RAP1-like protein from Caenorhabditis elegans.